The sequence spans 524 residues: PiggyBac transposable element-derived protein 5 (524 aa).

A disordered region spans residues 30–117 (DDVFGESGPD…DTGGPTRKMP (88 aa)). A compositionally biased stretch (low complexity) spans 47–59 (STSAASRSSSAAS). Residues 67–79 (PGPPGAAPPPPRA) are compositionally biased toward pro residues. The span at 98 to 108 (LRDRPPPRFED) shows a compositional bias: basic and acidic residues. Ser521 carries the post-translational modification Phosphoserine.

Its subcellular location is the nucleus. In terms of biological role, transposase that mediates sequence-specific genomic rearrangements. Can induce genomic rearrangements that inactivate the HPRT1 gene. The sequence is that of PiggyBac transposable element-derived protein 5 (PGBD5) from Homo sapiens (Human).